Reading from the N-terminus, the 381-residue chain is cAMP-dependent protein kinase type I-alpha regulatory subunit (381 aa).

Position 1 is an N-acetylmethionine (methionine 1). Residues 1-135 (MESGSTAASE…AALAKAIEKN (135 aa)) are dimerization and phosphorylation. Phosphoserine is present on serine 3. Positions 64–96 (QIQNLQKAGTRTDSREDEISPPPPNPVVKGRRR) are disordered. Position 75 is a phosphothreonine (threonine 75). Phosphoserine is present on residues serine 77 and serine 83. The Pseudophosphorylation motif motif lies at 96–100 (RRGAI). Serine 101 bears the Phosphoserine mark. Residues 137-254 (LFSH…SKVS), glutamate 202, arginine 211, 255-381 (ILES…SLSV), glutamate 326, and arginine 335 contribute to the 3',5'-cyclic AMP site. Phosphoserine is present on serine 258.

The protein belongs to the cAMP-dependent kinase regulatory chain family. In terms of assembly, the inactive holoenzyme is composed of two regulatory chains and two catalytic chains. Activation by cAMP releases the two active catalytic monomers and the regulatory dimer. Interacts with PRKACA and PRKACB. PRKAR1A also interacts with RFC2; the complex may be involved in cell survival. Interacts with AKAP4. Interacts with RARA; the interaction occurs in the presence of cAMP or FSH and regulates RARA transcriptional activity. Interacts with the phosphorylated form of PJA2. Interacts with CBFA2T3. Interacts with PRKX; regulates this cAMP-dependent protein kinase. Interacts with smAKAP; this interaction may target PRKAR1A to the plasma membrane. Interacts with AICDA. Post-translationally, the pseudophosphorylation site binds to the substrate-binding region of the catalytic chain, resulting in the inhibition of its activity.

It localises to the cell membrane. Regulatory subunit of the cAMP-dependent protein kinases involved in cAMP signaling in cells. The sequence is that of cAMP-dependent protein kinase type I-alpha regulatory subunit (PRKAR1A) from Pongo abelii (Sumatran orangutan).